A 148-amino-acid chain; its full sequence is 3-dehydroquinate dehydratase (148 aa).

Tyrosine 23 serves as the catalytic Proton acceptor. Substrate-binding residues include asparagine 75, histidine 81, and aspartate 88. Histidine 101 functions as the Proton donor in the catalytic mechanism. Substrate contacts are provided by residues 102–103 and arginine 112; that span reads LS.

This sequence belongs to the type-II 3-dehydroquinase family. As to quaternary structure, homododecamer.

The catalysed reaction is 3-dehydroquinate = 3-dehydroshikimate + H2O. It participates in metabolic intermediate biosynthesis; chorismate biosynthesis; chorismate from D-erythrose 4-phosphate and phosphoenolpyruvate: step 3/7. Catalyzes a trans-dehydration via an enolate intermediate. The chain is 3-dehydroquinate dehydratase from Xylella fastidiosa (strain M23).